We begin with the raw amino-acid sequence, 302 residues long: Putative T-box protein 34 (302 aa).

A DNA-binding region (T-box) is located at residues 5-180 (IVNEHKYREL…KMNLAPGSSQ (176 aa)).

The protein resides in the nucleus. The protein is Putative T-box protein 34 (tbx-34) of Caenorhabditis elegans.